Consider the following 189-residue polypeptide: Pyridoxal 5'-phosphate synthase subunit PdxT (189 aa).

G46 to S48 is an L-glutamine binding site. The Nucleophile role is filled by C78. Residues R107 and I136–R137 each bind L-glutamine. Catalysis depends on charge relay system residues H173 and E175.

The protein belongs to the glutaminase PdxT/SNO family. As to quaternary structure, in the presence of PdxS, forms a dodecamer of heterodimers. Only shows activity in the heterodimer.

The catalysed reaction is aldehydo-D-ribose 5-phosphate + D-glyceraldehyde 3-phosphate + L-glutamine = pyridoxal 5'-phosphate + L-glutamate + phosphate + 3 H2O + H(+). The enzyme catalyses L-glutamine + H2O = L-glutamate + NH4(+). The protein operates within cofactor biosynthesis; pyridoxal 5'-phosphate biosynthesis. Functionally, catalyzes the hydrolysis of glutamine to glutamate and ammonia as part of the biosynthesis of pyridoxal 5'-phosphate. The resulting ammonia molecule is channeled to the active site of PdxS. The chain is Pyridoxal 5'-phosphate synthase subunit PdxT from Roseiflexus castenholzii (strain DSM 13941 / HLO8).